The primary structure comprises 169 residues: Protein MGF 110-12L (169 aa).

3 helical membrane passes run 2 to 20 (KVFL…LTYQ), 121 to 141 (QCCF…FAIC), and 148 to 168 (TTIK…PILN).

The protein belongs to the asfivirus MGF 110 family.

Its subcellular location is the host membrane. Its function is as follows. Plays a role in virus cell tropism, and may be required for efficient virus replication in macrophages. In African swine fever virus (isolate Pig/Kenya/KEN-50/1950) (ASFV), this protein is Protein MGF 110-12L.